We begin with the raw amino-acid sequence, 136 residues long: MARTKQTARKSTGGKAPRKQLATKAARKSAPATGGVKKPHRFRPGTVALREIRKYQKSTELLIRKLPFQRLVREIAQDFKTDLRFQSSAVSALQEAAEAYLVGLFEDTNLCAIHAKRVTIMPKDIQLARRIRGERA.

The disordered stretch occupies residues 1 to 43; sequence MARTKQTARKSTGGKAPRKQLATKAARKSAPATGGVKKPHRFR. At Lys-5 the chain carries N6-methylated lysine. Lys-10 carries the N6-acetyllysine; alternate modification. Lys-10 carries the post-translational modification N6-methylated lysine; alternate. Ser-11 is modified (phosphoserine). Thr-12 bears the Phosphothreonine mark. Lys-15 is subject to N6-acetyllysine. 2 positions are modified to N6-acetyllysine; alternate: Lys-19 and Lys-24. Residues Lys-19 and Lys-24 each carry the N6-methylated lysine; alternate modification. Position 28 is an N6-methylated lysine (Lys-28). Ser-29 carries the post-translational modification Phosphoserine. Residue Lys-37 is modified to N6-methylated lysine.

The protein belongs to the histone H3 family. In terms of assembly, the nucleosome is a histone octamer containing two molecules each of H2A, H2B, H3 and H4 assembled in one H3-H4 heterotetramer and two H2A-H2B heterodimers. The octamer wraps approximately 147 bp of DNA. Post-translationally, acetylation is generally linked to gene activation. Can be acetylated to form H3K9ac, H3K14ac, H3K18ac and H3K23ac. H3K9ac could compete with H3K9me and prevent gene silencing. H3K9ac is restricted to euchromatin. In terms of processing, methylated to form mainly H3K4me, H3K9me, H3K18me, H3K23me, H3K27me and H3K36me. H3K4me1/2/3, H3K9me3, H3K27me3 and H3K36me1/2/3 are typical marks for euchromatin, whereas heterochromatic chromocenters are enriched in H3K9me1/2 and H3K27me1/2. H2BK143ub1 is probably prerequisite for H3K4me. Can be phosphorylated to form H3S10ph, H3T11ph and H3S28ph.

The protein resides in the nucleus. It localises to the chromosome. Its function is as follows. Core component of nucleosome. Nucleosomes wrap and compact DNA into chromatin, limiting DNA accessibility to the cellular machineries which require DNA as a template. Histones thereby play a central role in transcription regulation, DNA repair, DNA replication and chromosomal stability. DNA accessibility is regulated via a complex set of post-translational modifications of histones, also called histone code, and nucleosome remodeling. This chain is Histone H3.2, found in Triticum aestivum (Wheat).